Consider the following 337-residue polypeptide: Protein-arginine kinase (337 aa).

One can recognise a Phosphagen kinase C-terminal domain in the interval 8-239; that stretch reads VVLSSRIRLA…KQIISSERRA (232 aa). Residues 11–15, His76, Arg110, 161–165, and 192–197 contribute to the ATP site; these read SSRIR, RASVM, and RGIYGE. Residues 321 to 326 carry the RDXXRA motif of the pArg binding pocket involved in allosteric regulation motif; sequence RDVKRA.

It belongs to the ATP:guanido phosphotransferase family.

The enzyme catalyses L-arginyl-[protein] + ATP = N(omega)-phospho-L-arginyl-[protein] + ADP + H(+). Its activity is regulated as follows. Appears to be allosterically activated by the binding of pArg-containing polypeptides to the pArg-binding pocket localized in the C-terminal domain of McsB. Its function is as follows. Catalyzes the specific phosphorylation of arginine residues in proteins. This chain is Protein-arginine kinase, found in Caldanaerobacter subterraneus subsp. tengcongensis (strain DSM 15242 / JCM 11007 / NBRC 100824 / MB4) (Thermoanaerobacter tengcongensis).